Reading from the N-terminus, the 195-residue chain is Penicillin-binding protein activator LpoB (195 aa).

A signal peptide spans 1–16; the sequence is MKKRALIVLAALVLAS. Cysteine 17 carries the N-palmitoyl cysteine lipid modification. A lipid anchor (S-diacylglycerol cysteine) is attached at cysteine 17. The disordered stretch occupies residues 19-51; the sequence is SRKPASPPAPIEPVPPPVTVSVQPPPPATSEPV. The segment covering 23-51 has biased composition (pro residues); the sequence is ASPPAPIEPVPPPVTVSVQPPPPATSEPV.

It belongs to the LpoB family. As to quaternary structure, interacts with PBP1b.

The protein resides in the cell outer membrane. Functionally, regulator of peptidoglycan synthesis that is essential for the function of penicillin-binding protein 1B (PBP1b). The protein is Penicillin-binding protein activator LpoB of Sodalis glossinidius (strain morsitans).